A 362-amino-acid polypeptide reads, in one-letter code: NAD(P)H-quinone oxidoreductase subunit 1, chloroplastic (362 aa).

The next 8 membrane-spanning stretches (helical) occupy residues 27 to 47 (IWIL…LVIV), 94 to 114 (IPLF…SFLV), 128 to 148 (IGVF…LMAG), 164 to 184 (AAQS…ISLL), 202 to 222 (FFGW…ISSL), 247 to 267 (YSGI…LVSS), 303 to 323 (TMSI…SITI), and 335 to 355 (LLNL…LLTT).

This sequence belongs to the complex I subunit 1 family. As to quaternary structure, NDH is composed of at least 16 different subunits, 5 of which are encoded in the nucleus.

The protein resides in the plastid. Its subcellular location is the chloroplast thylakoid membrane. It catalyses the reaction a plastoquinone + NADH + (n+1) H(+)(in) = a plastoquinol + NAD(+) + n H(+)(out). The catalysed reaction is a plastoquinone + NADPH + (n+1) H(+)(in) = a plastoquinol + NADP(+) + n H(+)(out). NDH shuttles electrons from NAD(P)H:plastoquinone, via FMN and iron-sulfur (Fe-S) centers, to quinones in the photosynthetic chain and possibly in a chloroplast respiratory chain. The immediate electron acceptor for the enzyme in this species is believed to be plastoquinone. Couples the redox reaction to proton translocation, and thus conserves the redox energy in a proton gradient. The polypeptide is NAD(P)H-quinone oxidoreductase subunit 1, chloroplastic (ndhA) (Oryza sativa (Rice)).